Consider the following 370-residue polypeptide: UDP-N-acetylglucosamine--N-acetylmuramyl-(pentapeptide) pyrophosphoryl-undecaprenol N-acetylglucosamine transferase (370 aa).

UDP-N-acetyl-alpha-D-glucosamine is bound by residues 10-12 (TGG), N126, S200, I255, and Q300.

Belongs to the glycosyltransferase 28 family. MurG subfamily.

The protein localises to the cell membrane. It carries out the reaction Mur2Ac(oyl-L-Ala-gamma-D-Glu-L-Lys-D-Ala-D-Ala)-di-trans,octa-cis-undecaprenyl diphosphate + UDP-N-acetyl-alpha-D-glucosamine = beta-D-GlcNAc-(1-&gt;4)-Mur2Ac(oyl-L-Ala-gamma-D-Glu-L-Lys-D-Ala-D-Ala)-di-trans,octa-cis-undecaprenyl diphosphate + UDP + H(+). It participates in cell wall biogenesis; peptidoglycan biosynthesis. Functionally, cell wall formation. Catalyzes the transfer of a GlcNAc subunit on undecaprenyl-pyrophosphoryl-MurNAc-pentapeptide (lipid intermediate I) to form undecaprenyl-pyrophosphoryl-MurNAc-(pentapeptide)GlcNAc (lipid intermediate II). This chain is UDP-N-acetylglucosamine--N-acetylmuramyl-(pentapeptide) pyrophosphoryl-undecaprenol N-acetylglucosamine transferase, found in Lactobacillus delbrueckii subsp. bulgaricus (strain ATCC 11842 / DSM 20081 / BCRC 10696 / JCM 1002 / NBRC 13953 / NCIMB 11778 / NCTC 12712 / WDCM 00102 / Lb 14).